The chain runs to 177 residues: Large ribosomal subunit protein uL6 (177 aa).

This sequence belongs to the universal ribosomal protein uL6 family. Part of the 50S ribosomal subunit.

This protein binds to the 23S rRNA, and is important in its secondary structure. It is located near the subunit interface in the base of the L7/L12 stalk, and near the tRNA binding site of the peptidyltransferase center. In Rhizobium etli (strain CIAT 652), this protein is Large ribosomal subunit protein uL6.